A 468-amino-acid chain; its full sequence is MPITGTVLRRFITKGVIPMCQVAPLSTSAEGSTNLKEVLSKKIPAHNAKVKSFRAEHGNTVVQSVNIDMIYGGMRSMKGMVTETSVLDPEEGIRFRGYSIPECQKLLPKAKGGEEPLPEAIWWLLCTGDVPSEAQTAAITKEWNARADLPTHVVRMLDNFPDNLHPMAQFIAAIAALNNESKFAGAYARGVAKASYWEYAYEDSMDLLAKLPTVAAIIYRNLYRDGSAVSVIDPKKDWSANFSSMLGYDDPLFAELMRLYLVIHSDHEGGNVSAHTSHLVGSALSDPYLAFSAAMAGLAGPLHGLANQEVLVFLNKIVGEIGFNYTEEQLKEWVWKHLKSGQVVPGYGHAVLRKTDPRYECQREFALKHLPNDDLFKLVSTLYKITPGILLEQGKAKNPWPNVDSHSGVLLQYFGMTEMSFYTVLFGVSRALGCLSQLIWARGMGLPLERPKSHSTEGLIKLAMAAKK.

Active-site residues include His-303, His-349, and Asp-404.

It belongs to the citrate synthase family. Homodimer.

It is found in the mitochondrion matrix. It catalyses the reaction oxaloacetate + acetyl-CoA + H2O = citrate + CoA + H(+). It functions in the pathway carbohydrate metabolism; tricarboxylic acid cycle; isocitrate from oxaloacetate: step 1/2. The polypeptide is Probable citrate synthase, mitochondrial (cts-1) (Caenorhabditis briggsae).